A 183-amino-acid chain; its full sequence is Translation initiation factor IF-3 (183 aa).

This sequence belongs to the IF-3 family. As to quaternary structure, monomer.

It localises to the cytoplasm. In terms of biological role, IF-3 binds to the 30S ribosomal subunit and shifts the equilibrium between 70S ribosomes and their 50S and 30S subunits in favor of the free subunits, thus enhancing the availability of 30S subunits on which protein synthesis initiation begins. This Yersinia pseudotuberculosis serotype O:1b (strain IP 31758) protein is Translation initiation factor IF-3.